A 326-amino-acid polypeptide reads, in one-letter code: Nitrogen metabolite regulation-like protein bik4 (326 aa).

Residues 13–18 (GATGEV) and 161–164 (FASN) each bind NADP(+).

The protein belongs to the NmrA-type oxidoreductase family.

Its function is as follows. Nitrogen metabolite regulation-like protein involved in the regulation of the gene cluster that mediates the biosynthesis of bikaverin, a red pigment also considered as a mycotoxin. This is Nitrogen metabolite regulation-like protein bik4 from Gibberella fujikuroi (strain CBS 195.34 / IMI 58289 / NRRL A-6831) (Bakanae and foot rot disease fungus).